The chain runs to 198 residues: Ribonuclease HII (198 aa).

In terms of domain architecture, RNase H type-2 spans 10-198 (HLVAGVDEVG…PVKRALGLAS (189 aa)). A divalent metal cation-binding residues include D16, E17, and D108.

The protein belongs to the RNase HII family. Mn(2+) is required as a cofactor. Mg(2+) serves as cofactor.

It localises to the cytoplasm. It catalyses the reaction Endonucleolytic cleavage to 5'-phosphomonoester.. Its function is as follows. Endonuclease that specifically degrades the RNA of RNA-DNA hybrids. This is Ribonuclease HII from Escherichia coli (strain ATCC 8739 / DSM 1576 / NBRC 3972 / NCIMB 8545 / WDCM 00012 / Crooks).